The sequence spans 79 residues: Small ribosomal subunit protein bS18c (79 aa).

This sequence belongs to the bacterial ribosomal protein bS18 family. As to quaternary structure, part of the 30S ribosomal subunit.

The protein localises to the plastid. It localises to the chloroplast. The protein is Small ribosomal subunit protein bS18c of Physcomitrium patens (Spreading-leaved earth moss).